We begin with the raw amino-acid sequence, 156 residues long: ATP synthase subunit b (156 aa).

The helical transmembrane segment at 5-27 threads the bilayer; that stretch reads ITLIGQMITFAIFIGFTMKFVWP.

This sequence belongs to the ATPase B chain family. F-type ATPases have 2 components, F(1) - the catalytic core - and F(0) - the membrane proton channel. F(1) has five subunits: alpha(3), beta(3), gamma(1), delta(1), epsilon(1). F(0) has three main subunits: a(1), b(2) and c(10-14). The alpha and beta chains form an alternating ring which encloses part of the gamma chain. F(1) is attached to F(0) by a central stalk formed by the gamma and epsilon chains, while a peripheral stalk is formed by the delta and b chains.

The protein resides in the cell inner membrane. Its function is as follows. F(1)F(0) ATP synthase produces ATP from ADP in the presence of a proton or sodium gradient. F-type ATPases consist of two structural domains, F(1) containing the extramembraneous catalytic core and F(0) containing the membrane proton channel, linked together by a central stalk and a peripheral stalk. During catalysis, ATP synthesis in the catalytic domain of F(1) is coupled via a rotary mechanism of the central stalk subunits to proton translocation. In terms of biological role, component of the F(0) channel, it forms part of the peripheral stalk, linking F(1) to F(0). The sequence is that of ATP synthase subunit b from Francisella tularensis subsp. holarctica (strain OSU18).